The primary structure comprises 205 residues: Glycerol-3-phosphate acyltransferase (205 aa).

A run of 5 helical transmembrane segments spans residues 13–33 (LLAL…GLIL), 68–88 (LLLD…LWGY), 90–110 (ASLV…WLGF), 120–140 (IGVL…IWLA), and 147–167 (YSSL…WVLG).

Belongs to the PlsY family. Probably interacts with PlsX.

The protein resides in the cell inner membrane. The enzyme catalyses an acyl phosphate + sn-glycerol 3-phosphate = a 1-acyl-sn-glycero-3-phosphate + phosphate. Its pathway is lipid metabolism; phospholipid metabolism. Functionally, catalyzes the transfer of an acyl group from acyl-phosphate (acyl-PO(4)) to glycerol-3-phosphate (G3P) to form lysophosphatidic acid (LPA). This enzyme utilizes acyl-phosphate as fatty acyl donor, but not acyl-CoA or acyl-ACP. The sequence is that of Glycerol-3-phosphate acyltransferase from Agrobacterium fabrum (strain C58 / ATCC 33970) (Agrobacterium tumefaciens (strain C58)).